Consider the following 350-residue polypeptide: GTPase Obg (350 aa).

One can recognise an Obg domain in the interval 1–175; that stretch reads MFVDNIRIFA…GVFFMELRRI (175 aa). The 170-residue stretch at 176 to 345 folds into the OBG-type G domain; it reads ADAGLVGYPN…LRNRLDELVG (170 aa). Residues 182-189, 207-211, 229-232, 299-302, and 326-328 contribute to the GTP site; these read GYPNAGKS, FTTLQ, DIPG, NKMD, and SAL. The Mg(2+) site is built by S189 and T209.

It belongs to the TRAFAC class OBG-HflX-like GTPase superfamily. OBG GTPase family. In terms of assembly, monomer. Mg(2+) serves as cofactor.

The protein resides in the cytoplasm. An essential GTPase which binds GTP, GDP and possibly (p)ppGpp with moderate affinity, with high nucleotide exchange rates and a fairly low GTP hydrolysis rate. Plays a role in control of the cell cycle, stress response, ribosome biogenesis and in those bacteria that undergo differentiation, in morphogenesis control. This chain is GTPase Obg, found in Akkermansia muciniphila (strain ATCC BAA-835 / DSM 22959 / JCM 33894 / BCRC 81048 / CCUG 64013 / CIP 107961 / Muc).